The primary structure comprises 224 residues: Orotate phosphoribosyltransferase (224 aa).

Residues lysine 26, 73–74 (YK), arginine 100, lysine 101, lysine 104, histidine 106, and 127–135 (EDVTTSGKS) contribute to the 5-phospho-alpha-D-ribose 1-diphosphate site. Threonine 131 and arginine 160 together coordinate orotate.

Belongs to the purine/pyrimidine phosphoribosyltransferase family. PyrE subfamily. As to quaternary structure, homodimer. Mg(2+) is required as a cofactor.

The enzyme catalyses orotidine 5'-phosphate + diphosphate = orotate + 5-phospho-alpha-D-ribose 1-diphosphate. Its pathway is pyrimidine metabolism; UMP biosynthesis via de novo pathway; UMP from orotate: step 1/2. Its function is as follows. Catalyzes the transfer of a ribosyl phosphate group from 5-phosphoribose 1-diphosphate to orotate, leading to the formation of orotidine monophosphate (OMP). The protein is Orotate phosphoribosyltransferase of Clostridium botulinum (strain Alaska E43 / Type E3).